Here is a 466-residue protein sequence, read N- to C-terminus: Cysteine--tRNA ligase (466 aa).

A Zn(2+)-binding site is contributed by cysteine 29. A 'HIGH' region motif is present at residues 31–41 (PTVYNYIHIGN). Zn(2+) contacts are provided by cysteine 209, histidine 234, and glutamate 238. A 'KMSKS' region motif is present at residues 266 to 270 (KMSKS). Position 269 (lysine 269) interacts with ATP. Serine 270 bears the Phosphoserine mark.

The protein belongs to the class-I aminoacyl-tRNA synthetase family. Monomer. Requires Zn(2+) as cofactor.

The protein resides in the cytoplasm. The enzyme catalyses tRNA(Cys) + L-cysteine + ATP = L-cysteinyl-tRNA(Cys) + AMP + diphosphate. The polypeptide is Cysteine--tRNA ligase (Bacillus velezensis (strain DSM 23117 / BGSC 10A6 / LMG 26770 / FZB42) (Bacillus amyloliquefaciens subsp. plantarum)).